Reading from the N-terminus, the 79-residue chain is Conotoxin ArMKLT2-031 (79 aa).

An N-terminal signal peptide occupies residues Met-1 to Gly-22. Residues Glu-23 to Arg-46 constitute a propeptide that is removed on maturation. The residue at position 47 (Gln-47) is a Pyrrolidone carboxylic acid. Intrachain disulfides connect Cys-48–Cys-62, Cys-55–Cys-66, and Cys-61–Cys-73.

The protein belongs to the conotoxin O1 superfamily. As to expression, expressed by the venom duct.

The protein resides in the secreted. The polypeptide is Conotoxin ArMKLT2-031 (Conus arenatus (Sand-dusted cone)).